Consider the following 150-residue polypeptide: UPF0178 protein Rru_A0086 (150 aa).

Belongs to the UPF0178 family.

In Rhodospirillum rubrum (strain ATCC 11170 / ATH 1.1.1 / DSM 467 / LMG 4362 / NCIMB 8255 / S1), this protein is UPF0178 protein Rru_A0086.